The primary structure comprises 115 residues: UPF0145 protein lp_2083 (115 aa).

The protein belongs to the UPF0145 family.

The chain is UPF0145 protein lp_2083 from Lactiplantibacillus plantarum (strain ATCC BAA-793 / NCIMB 8826 / WCFS1) (Lactobacillus plantarum).